The sequence spans 683 residues: Methionine--tRNA ligase (683 aa).

Positions 15–25 match the 'HIGH' region motif; the sequence is PYANGPIHLGH. Cysteine 146, cysteine 149, cysteine 159, and cysteine 162 together coordinate Zn(2+). Positions 332–336 match the 'KMSKS' region motif; the sequence is KMSKS. Lysine 335 is an ATP binding site. Positions 581 to 683 constitute a tRNA-binding domain; it reads DFFKVDLRVA…AGAKAGQRVK (103 aa).

This sequence belongs to the class-I aminoacyl-tRNA synthetase family. MetG type 1 subfamily. In terms of assembly, homodimer. Requires Zn(2+) as cofactor.

It localises to the cytoplasm. It catalyses the reaction tRNA(Met) + L-methionine + ATP = L-methionyl-tRNA(Met) + AMP + diphosphate. In terms of biological role, is required not only for elongation of protein synthesis but also for the initiation of all mRNA translation through initiator tRNA(fMet) aminoacylation. The sequence is that of Methionine--tRNA ligase from Histophilus somni (strain 129Pt) (Haemophilus somnus).